Reading from the N-terminus, the 1087-residue chain is Exportin-7 (1087 aa).

In terms of domain architecture, Importin N-terminal spans 30–96 (AEKALVEFTN…RNYVLNYLAT (67 aa)).

Belongs to the exportin family.

It is found in the cytoplasm. The protein resides in the nucleus. Functionally, mediates the nuclear export of proteins (cargos) with broad substrate specificity. The polypeptide is Exportin-7 (XPO7) (Gallus gallus (Chicken)).